Reading from the N-terminus, the 395-residue chain is Digeranylgeranylglycerophospholipid reductase (395 aa).

Positions 15, 34, 45, 46, 48, 97, 121, 276, and 288 each coordinate FAD. Residue R329 participates in a 2,3-bis-O-(geranylgeranyl)-sn-glycerol 1-phospholipid binding.

This sequence belongs to the geranylgeranyl reductase family. DGGGPL reductase subfamily. FAD is required as a cofactor.

The catalysed reaction is a 2,3-bis-O-phytanyl-sn-glycerol 1-phospholipid + 8 A = a 2,3-bis-O-(geranylgeranyl)-sn-glycerol 1-phospholipid + 8 AH2. It carries out the reaction 2,3-bis-O-(phytanyl)-sn-glycerol 1-phosphate + 8 A = 2,3-bis-O-(geranylgeranyl)-sn-glycerol 1-phosphate + 8 AH2. The enzyme catalyses CDP-2,3-bis-O-(geranylgeranyl)-sn-glycerol + 8 AH2 = CDP-2,3-bis-O-(phytanyl)-sn-glycerol + 8 A. It catalyses the reaction archaetidylserine + 8 AH2 = 2,3-bis-O-phytanyl-sn-glycero-3-phospho-L-serine + 8 A. It functions in the pathway membrane lipid metabolism; glycerophospholipid metabolism. Functionally, is involved in the reduction of 2,3-digeranylgeranylglycerophospholipids (unsaturated archaeols) into 2,3-diphytanylglycerophospholipids (saturated archaeols) in the biosynthesis of archaeal membrane lipids. Catalyzes the formation of archaetidic acid (2,3-di-O-phytanyl-sn-glyceryl phosphate) from 2,3-di-O-geranylgeranylglyceryl phosphate (DGGGP) via the hydrogenation of each double bond of the isoprenoid chains. Is also probably able to reduce double bonds of geranyl groups in CDP-2,3-bis-O-(geranylgeranyl)-sn-glycerol and archaetidylserine, thus acting at various stages in the biosynthesis of archaeal membrane lipids. This Thermococcus kodakarensis (strain ATCC BAA-918 / JCM 12380 / KOD1) (Pyrococcus kodakaraensis (strain KOD1)) protein is Digeranylgeranylglycerophospholipid reductase.